The following is a 154-amino-acid chain: UPF0127 protein TSIB_1463 (154 aa).

Belongs to the UPF0127 family.

In Thermococcus sibiricus (strain DSM 12597 / MM 739), this protein is UPF0127 protein TSIB_1463.